Reading from the N-terminus, the 140-residue chain is Smith-Magenis syndrome chromosomal region candidate gene 5 protein (140 aa).

The tract at residues 43–77 is disordered; that stretch reads CTGPSSQAPPQPPQASPPAAADHSRTPSLLASSHS. The segment covering 49–58 has biased composition (pro residues); that stretch reads QAPPQPPQAS.

As to expression, widely expressed.

The protein is Smith-Magenis syndrome chromosomal region candidate gene 5 protein (SMCR5) of Homo sapiens (Human).